A 95-amino-acid polypeptide reads, in one-letter code: Large ribosomal subunit protein uL23 (95 aa).

This sequence belongs to the universal ribosomal protein uL23 family. In terms of assembly, part of the 50S ribosomal subunit. Contacts protein L29, and trigger factor when it is bound to the ribosome.

Its function is as follows. One of the early assembly proteins it binds 23S rRNA. One of the proteins that surrounds the polypeptide exit tunnel on the outside of the ribosome. Forms the main docking site for trigger factor binding to the ribosome. In Geobacillus thermodenitrificans (strain NG80-2), this protein is Large ribosomal subunit protein uL23.